Reading from the N-terminus, the 365-residue chain is Endophilin-B1 (365 aa).

Met1 carries the N-acetylmethionine modification. The tract at residues 1 to 30 (MNIMDFNVKKLAADAGTFLSRAVQFTEEKL) is membrane-binding amphipathic helix. The interval 1–37 (MNIMDFNVKKLAADAGTFLSRAVQFTEEKLGQAEKTE) is required for membrane binding. The 235-residue stretch at 27–261 (EEKLGQAEKT…LGSFPSNYVS (235 aa)) folds into the BAR domain. Thr145 bears the Phosphothreonine; by CDK5 mark. Residues 156–185 (KTIAKERKLLQNKRLDLDAAKTRLKKAKAA) adopt a coiled-coil conformation. The SH3 domain maps to 305–365 (SSTRKARVLY…VPITYLELLN (61 aa)).

Belongs to the endophilin family. Homodimer, and heterodimer with SH3GLB2. Binds BAX; induction of apoptosis augments BAX binding. Binds DNM1, HTT, AMPH, BIN1 and ARFGAP1. Interacts with UVRAG; UVRAG bridges the interaction to BECN1 indicative for an association with the PI3K complex II (PI3KC3-C2). Post-translationally, phosphorylated at Thr-145 by CDK5; this phosphorylation is required for autophagy induction in starved neurons and facilitates homodimerization. In terms of tissue distribution, expressed in brain, heart, lung and spleen. Low level in liver and testis.

The protein resides in the cytoplasm. It localises to the golgi apparatus membrane. It is found in the mitochondrion outer membrane. The protein localises to the cytoplasmic vesicle. Its subcellular location is the autophagosome membrane. The protein resides in the midbody. In terms of biological role, may be required for normal outer mitochondrial membrane dynamics. Required for coatomer-mediated retrograde transport in certain cells. May recruit other proteins to membranes with high curvature. May promote membrane fusion. Involved in activation of caspase-dependent apoptosis by promoting BAX/BAK1 activation. Involved in caspase-independent apoptosis during nutrition starvation and involved in the regulation of autophagy. Activates lipid kinase activity of PIK3C3 during autophagy probably by associating with the PI3K complex II (PI3KC3-C2). Associated with PI3KC3-C2 during autophagy may regulate the trafficking of ATG9A from the Golgi complex to the peripheral cytoplasm for the formation of autophagosomes by inducing Golgi membrane tubulation and fragmentation. Involved in regulation of degradative endocytic trafficking and cytokinesis, probably in the context of PI3KC3-C2. This chain is Endophilin-B1, found in Rattus norvegicus (Rat).